An 81-amino-acid chain; its full sequence is Apolipoprotein C-I, acidic form (81 aa).

The signal sequence occupies residues 1–24; that stretch reads MRLFLSLLVVVLSIVLEGPTPAQG.

Belongs to the apolipoprotein C1 family.

Its subcellular location is the secreted. This Cercocebus atys (Sooty mangabey) protein is Apolipoprotein C-I, acidic form (APOC1A).